The following is a 595-amino-acid chain: uncharacterized protein (595 aa).

An N-terminal signal peptide occupies residues 1–23 (MLSLSSPPWLLLLVLFFFANGSA). 11 N-linked (GlcNAc...) asparagine glycosylation sites follow: N31, N63, N88, N112, N144, N187, N205, N389, N480, N492, and N506. The segment covering 61 to 83 (LENQTASSSNLNTNNEASDEQTG) has biased composition (polar residues). Disordered stretches follow at residues 61–119 (LENQ…VSSL) and 141–164 (TALN…TKGE). Over residues 84–119 (NSNSNTSSHSRNINGLPSSNSNIDNANSNSSSVSSL) the composition is skewed to low complexity.

The protein resides in the secreted. This is an uncharacterized protein from Drosophila melanogaster (Fruit fly).